Reading from the N-terminus, the 303-residue chain is Glycine--tRNA ligase alpha subunit (303 aa).

The protein belongs to the class-II aminoacyl-tRNA synthetase family. Tetramer of two alpha and two beta subunits.

The protein resides in the cytoplasm. It carries out the reaction tRNA(Gly) + glycine + ATP = glycyl-tRNA(Gly) + AMP + diphosphate. The sequence is that of Glycine--tRNA ligase alpha subunit from Stenotrophomonas maltophilia (strain R551-3).